The following is a 977-amino-acid chain: Serine/threonine-protein kinase N2 (977 aa).

3 REM-1 domains span residues 24 to 100, 114 to 194, and 200 to 280; these read NLDF…HIVV, DTPK…TSEI, and DVTT…ELPK. Residues 298-468 form the C2 domain; that stretch reads PPNSPRQSIM…LYLEPQGTLF (171 aa). 2 disordered regions span residues 342–381 and 531–576; these read GRSKTASVSLPGWSPSEARSSFMSRGNKNKSGSSRTLSKS and AADL…KRNS. Polar residues predominate over residues 358–378; the sequence is EARSSFMSRGNKNKSGSSRTL. The 260-residue stretch at 650 to 909 folds into the Protein kinase domain; it reads FKCVAVLGRG…AEEVKRHPFF (260 aa). Residues 656 to 664 and lysine 679 each bind ATP; that span reads LGRGHFGKV. Aspartate 775 functions as the Proton acceptor in the catalytic mechanism. One can recognise an AGC-kinase C-terminal domain in the interval 910–977; the sequence is RDMDWPGLLA…ADFDYIADWC (68 aa).

The protein belongs to the protein kinase superfamily. AGC Ser/Thr protein kinase family. PKC subfamily. In terms of processing, autophosphorylated. Phosphorylated. Post-translationally, proteolytically cleaved.

The protein localises to the cytoplasm. The protein resides in the nucleus. It is found in the membrane. It localises to the cell projection. Its subcellular location is the lamellipodium. The protein localises to the cytoskeleton. The protein resides in the cleavage furrow. It is found in the midbody. It localises to the cell junction. The catalysed reaction is L-seryl-[protein] + ATP = O-phospho-L-seryl-[protein] + ADP + H(+). It catalyses the reaction L-threonyl-[protein] + ATP = O-phospho-L-threonyl-[protein] + ADP + H(+). Its activity is regulated as follows. Kinase activity is activated upon binding to GTP-bound Rho/Rac GTPases. Activated by lipids, particularly cardiolipin and to a lesser extent by other acidic phospholipids and unsaturated fatty acids. Two specific sites, Thr-809 (activation loop of the kinase domain) and Thr-951 (turn motif), may be needed to be phosphorylated for its full activation. Its function is as follows. Pkc-related serine/threonine-protein kinase and Rho/Rac effector protein that participates in specific signal transduction responses in the cell. May play a role in the regulation of cell cycle progression, actin cytoskeleton assembly, cell migration, cell adhesion and transcription activation signaling processes. This chain is Serine/threonine-protein kinase N2 (pkn2), found in Danio rerio (Zebrafish).